Consider the following 571-residue polypeptide: Phosphomethylpyrimidine synthase (571 aa).

Substrate-binding positions include asparagine 201, methionine 230, tyrosine 259, histidine 295, 315 to 317 (SRG), 356 to 359 (DALR), and glutamate 395. Position 399 (histidine 399) interacts with Zn(2+). Tyrosine 422 contacts substrate. Histidine 463 is a Zn(2+) binding site. Positions 545, 548, and 553 each coordinate [4Fe-4S] cluster.

This sequence belongs to the ThiC family. Requires [4Fe-4S] cluster as cofactor.

It carries out the reaction 5-amino-1-(5-phospho-beta-D-ribosyl)imidazole + S-adenosyl-L-methionine = 4-amino-2-methyl-5-(phosphooxymethyl)pyrimidine + CO + 5'-deoxyadenosine + formate + L-methionine + 3 H(+). The protein operates within cofactor biosynthesis; thiamine diphosphate biosynthesis. Functionally, catalyzes the synthesis of the hydroxymethylpyrimidine phosphate (HMP-P) moiety of thiamine from aminoimidazole ribotide (AIR) in a radical S-adenosyl-L-methionine (SAM)-dependent reaction. The chain is Phosphomethylpyrimidine synthase from Chlorobium phaeovibrioides (strain DSM 265 / 1930) (Prosthecochloris vibrioformis (strain DSM 265)).